The primary structure comprises 127 residues: Methylglyoxal synthase (127 aa).

The MGS-like domain occupies 1-127 (MEGQRCIALI…ENLIDFNSAD (127 aa)). Substrate-binding positions include histidine 12, lysine 16, 38–41 (TGTT), and 59–60 (SG). Residue aspartate 65 is the Proton donor/acceptor of the active site. Substrate is bound at residue histidine 92.

The protein belongs to the methylglyoxal synthase family.

The enzyme catalyses dihydroxyacetone phosphate = methylglyoxal + phosphate. Catalyzes the formation of methylglyoxal from dihydroxyacetone phosphate. The protein is Methylglyoxal synthase of Agrobacterium fabrum (strain C58 / ATCC 33970) (Agrobacterium tumefaciens (strain C58)).